Here is a 138-residue protein sequence, read N- to C-terminus: Large ribosomal subunit protein uL16c (138 aa).

This sequence belongs to the universal ribosomal protein uL16 family. Part of the 50S ribosomal subunit.

The protein localises to the plastid. It localises to the chloroplast. In Emiliania huxleyi (Coccolithophore), this protein is Large ribosomal subunit protein uL16c.